A 435-amino-acid chain; its full sequence is 5-methylthioadenosine/S-adenosylhomocysteine deaminase (435 aa).

Zn(2+)-binding residues include His65 and His67. Substrate contacts are provided by Glu94, Arg150, and His189. Residue His216 coordinates Zn(2+). The substrate site is built by Glu219 and Asp304. Asp304 contacts Zn(2+).

Belongs to the metallo-dependent hydrolases superfamily. MTA/SAH deaminase family. Zn(2+) serves as cofactor.

The catalysed reaction is S-adenosyl-L-homocysteine + H2O + H(+) = S-inosyl-L-homocysteine + NH4(+). It catalyses the reaction S-methyl-5'-thioadenosine + H2O + H(+) = S-methyl-5'-thioinosine + NH4(+). In terms of biological role, catalyzes the deamination of 5-methylthioadenosine and S-adenosyl-L-homocysteine into 5-methylthioinosine and S-inosyl-L-homocysteine, respectively. Is also able to deaminate adenosine. This is 5-methylthioadenosine/S-adenosylhomocysteine deaminase from Bacillus thuringiensis (strain Al Hakam).